The chain runs to 242 residues: Methylthioribulose-1-phosphate dehydratase (242 aa).

The disordered stretch occupies residues 1–22 (MAAASGHGLELANGGDATQDKL). Residue Cys97 participates in substrate binding. Zn(2+) is bound by residues His115 and His117. Glu139 serves as the catalytic Proton donor/acceptor. Zn(2+) is bound at residue His195.

The protein belongs to the aldolase class II family. MtnB subfamily. Zn(2+) serves as cofactor.

The protein localises to the cytoplasm. The enzyme catalyses 5-(methylsulfanyl)-D-ribulose 1-phosphate = 5-methylsulfanyl-2,3-dioxopentyl phosphate + H2O. The protein operates within amino-acid biosynthesis; L-methionine biosynthesis via salvage pathway; L-methionine from S-methyl-5-thio-alpha-D-ribose 1-phosphate: step 2/6. Its function is as follows. Catalyzes the dehydration of methylthioribulose-1-phosphate (MTRu-1-P) into 2,3-diketo-5-methylthiopentyl-1-phosphate (DK-MTP-1-P). Functions in the methionine salvage pathway. May play a role in apoptosis. The sequence is that of Methylthioribulose-1-phosphate dehydratase from Gallus gallus (Chicken).